We begin with the raw amino-acid sequence, 367 residues long: Innexin inx4 (367 aa).

Residues 1–21 are Cytoplasmic-facing; the sequence is MYAAVKPLSKYLQFKSVHIYD. Residues 22 to 42 traverse the membrane as a helical segment; sequence AIFTLHSKVTVALLLACTFLL. Topologically, residues 43 to 110 are extracellular; that stretch reads SSKQYFGDPI…PENRNYITYY (68 aa). The helical transmembrane segment at 111-131 threads the bilayer; the sequence is QWVVLVLLLESFVFYMPAFLW. Residues 132–186 lie on the Cytoplasmic side of the membrane; it reads KIWEGGRLKHLCDDFHKMAVCKDKSRTHLRVLVNYFSSDYKETHFRYFVSYVFCE. The helical transmembrane segment at 187–207 threads the bilayer; it reads ILNLSISILNFLLLDVFFGGF. Over 208–268 the chain is Extracellular; that stretch reads WGRYRNALLS…LLPLNILNEK (61 aa). A helical membrane pass occupies residues 269–289; sequence IFAFLWIWFILVAMLISLKFL. Topologically, residues 290-367 are cytoplasmic; that stretch reads YRLATVLYPG…IKIPPGADKI (78 aa).

This sequence belongs to the pannexin family. In terms of tissue distribution, expressed in nurse cells and oocyte during oogenesis. Uniform expression in imaginal wing disk and low expression in developing imaginal CNS. Expressed in embryonic pole cells and primordial germ cells.

The protein localises to the cell membrane. It is found in the cell junction. The protein resides in the gap junction. Functionally, structural component of the gap junctions in germline cells. Required for differentiation and survival of germline cysts in females and of spermatogonia in males; gap junctional communication between spermatogonia and somatic cyst cells may be required for normal differentiation and survival of spermatogonia. This chain is Innexin inx4 (zpg), found in Drosophila melanogaster (Fruit fly).